Reading from the N-terminus, the 438-residue chain is Protein DAY-LENGTH-DEPENDENT DELAYED-GREENING 1, chloroplastic (438 aa).

A chloroplast-targeting transit peptide spans 1-54; it reads MSLMSSSMVLCHCLSFSSQNPDPESSSSSLLRYKPCDSISLWGKRRKKLWRFVP. Transmembrane regions (helical) follow at residues 216–236, 314–334, 359–379, and 398–418; these read FLAV…DYLL, AFAN…LLYA, AFLI…SGWE, and ITIF…LWLF.

The protein belongs to the CemA family.

The protein localises to the plastid. It is found in the chloroplast envelope. The protein resides in the chloroplast membrane. The catalysed reaction is K(+)(in) + H(+)(out) = K(+)(out) + H(+)(in). The enzyme catalyses Ca(2+)(in) + H(+)(out) = Ca(2+)(out) + H(+)(in). In terms of biological role, promotes K(+)/H(+) antiport activity supporting K(+) efflux to control H(+) homeostasis in chloroplasts. Also able to ensure Ca(2+)/H(+) antiport activity in vitro. Essential for chloroplast pH regulation and optimization of non-photochemical quenching (NPQ), a regulatory mechanism that dissipates excess light energy; acts downstream of PSBS but independently from PGR5 and FLAP1. This chain is Protein DAY-LENGTH-DEPENDENT DELAYED-GREENING 1, chloroplastic, found in Arabidopsis thaliana (Mouse-ear cress).